A 718-amino-acid polypeptide reads, in one-letter code: Probable trehalose-phosphatase (718 aa).

The disordered stretch occupies residues 449–470 (LSMDQTGHKKVDAKKKPGIRKK). The span at 459–470 (VDAKKKPGIRKK) shows a compositional bias: basic residues.

In the N-terminal section; belongs to the glycosyltransferase 20 family. The protein in the C-terminal section; belongs to the trehalose phosphatase family.

The enzyme catalyses alpha,alpha-trehalose 6-phosphate + H2O = alpha,alpha-trehalose + phosphate. This is Probable trehalose-phosphatase from Encephalitozoon cuniculi (strain GB-M1) (Microsporidian parasite).